A 35-amino-acid polypeptide reads, in one-letter code: Dermonecrotic toxin LrSicTox-alphaI-1 (35 aa).

Histidine 11 is a catalytic residue. A Mg(2+)-binding site is contributed by aspartate 33.

Belongs to the arthropod phospholipase D family. Class II subfamily. Mg(2+) is required as a cofactor. In terms of processing, contains 2 disulfide bonds. In terms of tissue distribution, expressed by the venom gland.

The protein localises to the secreted. The catalysed reaction is an N-(acyl)-sphingosylphosphocholine = an N-(acyl)-sphingosyl-1,3-cyclic phosphate + choline. It carries out the reaction an N-(acyl)-sphingosylphosphoethanolamine = an N-(acyl)-sphingosyl-1,3-cyclic phosphate + ethanolamine. It catalyses the reaction a 1-acyl-sn-glycero-3-phosphocholine = a 1-acyl-sn-glycero-2,3-cyclic phosphate + choline. The enzyme catalyses a 1-acyl-sn-glycero-3-phosphoethanolamine = a 1-acyl-sn-glycero-2,3-cyclic phosphate + ethanolamine. In terms of biological role, dermonecrotic toxins cleave the phosphodiester linkage between the phosphate and headgroup of certain phospholipids (sphingolipid and lysolipid substrates), forming an alcohol (often choline) and a cyclic phosphate. This toxin acts on sphingomyelin (SM). It may also act on ceramide phosphoethanolamine (CPE), lysophosphatidylcholine (LPC) and lysophosphatidylethanolamine (LPE), but not on lysophosphatidylserine (LPS), and lysophosphatidylglycerol (LPG). It acts by transphosphatidylation, releasing exclusively cyclic phosphate products as second products. Induces dermonecrosis, hemolysis, increased vascular permeability, edema, inflammatory response, and platelet aggregation. In Loxosceles reclusa (Brown recluse spider), this protein is Dermonecrotic toxin LrSicTox-alphaI-1.